The following is a 133-amino-acid chain: Profilin-1 (133 aa).

Belongs to the profilin family. As to quaternary structure, occurs in many kinds of cells as a complex with monomeric actin in a 1:1 ratio. In terms of tissue distribution, ubiquitous.

It localises to the cytoplasm. Its subcellular location is the cytoskeleton. Binds to actin and affects the structure of the cytoskeleton. At high concentrations, profilin prevents the polymerization of actin, whereas it enhances it at low concentrations. By binding to PIP2, it inhibits the formation of IP3 and DG. The chain is Profilin-1 (PRO1) from Solanum lycopersicum (Tomato).